Consider the following 143-residue polypeptide: Small ribosomal subunit protein bS6 (143 aa).

The interval G95 to A143 is disordered. The span at K105–D121 shows a compositional bias: basic and acidic residues.

This sequence belongs to the bacterial ribosomal protein bS6 family.

Its function is as follows. Binds together with bS18 to 16S ribosomal RNA. In Xylella fastidiosa (strain M23), this protein is Small ribosomal subunit protein bS6.